A 303-amino-acid chain; its full sequence is HTH-type transcriptional regulator LinR (303 aa).

Positions 6-63 (LDFRHLVLLDALLKRHSVSAAARELDLPQPTASHGLARLRKALGDPLLVRARDGMEPT) constitute an HTH lysR-type domain. The segment at residues 23-42 (VSAAARELDLPQPTASHGLA) is a DNA-binding region (H-T-H motif).

Belongs to the LysR transcriptional regulatory family.

In terms of biological role, positively regulates the transcription of the linD and linE genes that are involved in gamma-hexachlorocyclohexane (gamma-HCH or lindane) degradation. This degradation pathway allows S.japonicum UT26 to grow on gamma-HCH as the sole source of carbon and energy. The polypeptide is HTH-type transcriptional regulator LinR (linR) (Sphingobium indicum (strain DSM 16413 / CCM 7287 / MTCC 6362 / UT26 / NBRC 101211 / UT26S) (Sphingobium japonicum)).